We begin with the raw amino-acid sequence, 338 residues long: Heat-inducible transcription repressor HrcA (338 aa).

This sequence belongs to the HrcA family.

Functionally, negative regulator of class I heat shock genes (grpE-dnaK-dnaJ and groELS operons). Prevents heat-shock induction of these operons. The protein is Heat-inducible transcription repressor HrcA of Polaromonas sp. (strain JS666 / ATCC BAA-500).